An 848-amino-acid polypeptide reads, in one-letter code: DIS3-like exonuclease 2 (848 aa).

The segment at 153-173 is disordered; sequence KGDRNSGKTDNNSPNKTEKRC. Residues D345 and D354 each coordinate Mg(2+).

Belongs to the RNR ribonuclease family. DIS3L2 subfamily. Requires Mg(2+) as cofactor. Mn(2+) is required as a cofactor. In terms of processing, cleaved by caspase ced-3 in vitro.

Its subcellular location is the cytoplasm. It localises to the P-body. Functionally, 3'-5'-exoribonuclease that specifically recognizes RNAs polyuridylated at their 3' end and mediates their degradation. Component of an exosome-independent RNA degradation pathway that mediates degradation of cytoplasmic mRNAs that have been deadenylated and subsequently uridylated at their 3'. The chain is DIS3-like exonuclease 2 from Caenorhabditis elegans.